A 100-amino-acid chain; its full sequence is NADH-quinone oxidoreductase subunit K (100 aa).

3 consecutive transmembrane segments (helical) span residues 2–22, 29–49, and 60–80; these read IGLT…LVGI, IMLF…LAAI, and IIAF…LGLL.

It belongs to the complex I subunit 4L family. In terms of assembly, NDH-1 is composed of 14 different subunits. Subunits NuoA, H, J, K, L, M, N constitute the membrane sector of the complex.

It is found in the cell inner membrane. The catalysed reaction is a quinone + NADH + 5 H(+)(in) = a quinol + NAD(+) + 4 H(+)(out). Functionally, NDH-1 shuttles electrons from NADH, via FMN and iron-sulfur (Fe-S) centers, to quinones in the respiratory chain. The immediate electron acceptor for the enzyme in this species is believed to be ubiquinone. Couples the redox reaction to proton translocation (for every two electrons transferred, four hydrogen ions are translocated across the cytoplasmic membrane), and thus conserves the redox energy in a proton gradient. This Campylobacter concisus (strain 13826) protein is NADH-quinone oxidoreductase subunit K.